The primary structure comprises 175 residues: Putative transmembrane protein ORF175 (175 aa).

Transmembrane regions (helical) follow at residues 14–34 (LGIVYGSTLIILLLPLIGSFM), 58–78 (VLSNFGIFGGLALGVGSAIAF), 101–121 (IVVALLVSQFIFGGWATFALF), and 142–162 (ITPFIDGLIATLGGLMVVLSI).

Its subcellular location is the host membrane. In Acidianus two-tailed virus (ATV), this protein is Putative transmembrane protein ORF175.